A 729-amino-acid polypeptide reads, in one-letter code: DNA topoisomerase 3 (729 aa).

The Toprim domain occupies 3-136 (KSVVIAEKPS…IKRLWISSVT (134 aa)). Mg(2+) contacts are provided by Glu-9 and Asp-105. Residues 153 to 594 (YDNLYASAVA…EMKNYTKEIV (442 aa)) enclose the Topo IA-type catalytic domain. The segment at 187-192 (NCGRVQ) is interaction with DNA. Catalysis depends on Tyr-310, which acts as the O-(5'-phospho-DNA)-tyrosine intermediate. Residues 686-713 (ERRKKESGNKADKRDVQKYMKQQKKEEE) are compositionally biased toward basic and acidic residues. A disordered region spans residues 686 to 718 (ERRKKESGNKADKRDVQKYMKQQKKEEEPLNNP).

The protein belongs to the type IA topoisomerase family. It depends on Mg(2+) as a cofactor.

The enzyme catalyses ATP-independent breakage of single-stranded DNA, followed by passage and rejoining.. In terms of biological role, releases the supercoiling and torsional tension of DNA, which is introduced during the DNA replication and transcription, by transiently cleaving and rejoining one strand of the DNA duplex. Introduces a single-strand break via transesterification at a target site in duplex DNA. The scissile phosphodiester is attacked by the catalytic tyrosine of the enzyme, resulting in the formation of a DNA-(5'-phosphotyrosyl)-enzyme intermediate and the expulsion of a 3'-OH DNA strand. The free DNA strand then undergoes passage around the unbroken strand, thus removing DNA supercoils. Finally, in the religation step, the DNA 3'-OH attacks the covalent intermediate to expel the active-site tyrosine and restore the DNA phosphodiester backbone. This chain is DNA topoisomerase 3, found in Bacillus thuringiensis subsp. konkukian (strain 97-27).